The following is a 447-amino-acid chain: 3-phosphoshikimate 1-carboxyvinyltransferase (447 aa).

Residues lysine 36, serine 37, and arginine 41 each coordinate 3-phosphoshikimate. Lysine 36 is a phosphoenolpyruvate binding site. Residues glycine 109 and arginine 138 each coordinate phosphoenolpyruvate. The 3-phosphoshikimate site is built by serine 183, glutamine 185, aspartate 333, and lysine 360. Residue glutamine 185 coordinates phosphoenolpyruvate. Aspartate 333 functions as the Proton acceptor in the catalytic mechanism. The phosphoenolpyruvate site is built by arginine 364 and arginine 406.

It belongs to the EPSP synthase family. In terms of assembly, monomer.

Its subcellular location is the cytoplasm. It carries out the reaction 3-phosphoshikimate + phosphoenolpyruvate = 5-O-(1-carboxyvinyl)-3-phosphoshikimate + phosphate. The protein operates within metabolic intermediate biosynthesis; chorismate biosynthesis; chorismate from D-erythrose 4-phosphate and phosphoenolpyruvate: step 6/7. Functionally, catalyzes the transfer of the enolpyruvyl moiety of phosphoenolpyruvate (PEP) to the 5-hydroxyl of shikimate-3-phosphate (S3P) to produce enolpyruvyl shikimate-3-phosphate and inorganic phosphate. This is 3-phosphoshikimate 1-carboxyvinyltransferase from Synechocystis sp. (strain ATCC 27184 / PCC 6803 / Kazusa).